Reading from the N-terminus, the 332-residue chain is Ferredoxin--NADP reductase (332 aa).

FAD contacts are provided by Glu-35, Gln-43, Tyr-48, Val-88, Phe-122, Asp-286, and Ser-326.

This sequence belongs to the ferredoxin--NADP reductase type 2 family. As to quaternary structure, homodimer. FAD is required as a cofactor.

It catalyses the reaction 2 reduced [2Fe-2S]-[ferredoxin] + NADP(+) + H(+) = 2 oxidized [2Fe-2S]-[ferredoxin] + NADPH. The sequence is that of Ferredoxin--NADP reductase from Limosilactobacillus reuteri (strain DSM 20016) (Lactobacillus reuteri).